A 111-amino-acid chain; its full sequence is uncharacterized protein (111 aa).

A run of 2 helical transmembrane segments spans residues 7-27 (ILNI…SMMI) and 53-73 (AFAM…TFLH).

It is found in the cell membrane. This is an uncharacterized protein from Bacillus anthracis.